The chain runs to 236 residues: 2,3,4,5-tetrahydropyridine-2,6-dicarboxylate N-acetyltransferase (236 aa).

It belongs to the transferase hexapeptide repeat family. DapH subfamily.

It catalyses the reaction (S)-2,3,4,5-tetrahydrodipicolinate + acetyl-CoA + H2O = L-2-acetamido-6-oxoheptanedioate + CoA. Its pathway is amino-acid biosynthesis; L-lysine biosynthesis via DAP pathway; LL-2,6-diaminopimelate from (S)-tetrahydrodipicolinate (acetylase route): step 1/3. Functionally, catalyzes the transfer of an acetyl group from acetyl-CoA to tetrahydrodipicolinate. This chain is 2,3,4,5-tetrahydropyridine-2,6-dicarboxylate N-acetyltransferase, found in Clostridium botulinum (strain ATCC 19397 / Type A).